The sequence spans 286 residues: ATP synthase gamma chain (286 aa).

Belongs to the ATPase gamma chain family. As to quaternary structure, F-type ATPases have 2 components, CF(1) - the catalytic core - and CF(0) - the membrane proton channel. CF(1) has five subunits: alpha(3), beta(3), gamma(1), delta(1), epsilon(1). CF(0) has three main subunits: a, b and c.

The protein resides in the cell membrane. Produces ATP from ADP in the presence of a proton gradient across the membrane. The gamma chain is believed to be important in regulating ATPase activity and the flow of protons through the CF(0) complex. The protein is ATP synthase gamma chain of Ruminococcus albus (strain ATCC 27210 / DSM 20455 / JCM 14654 / NCDO 2250 / 7).